The primary structure comprises 489 residues: UDP-N-acetylmuramoylalanine--D-glutamate ligase (489 aa).

Residue 126 to 132 participates in ATP binding; the sequence is GTNGKTT.

Belongs to the MurCDEF family.

The protein resides in the cytoplasm. It carries out the reaction UDP-N-acetyl-alpha-D-muramoyl-L-alanine + D-glutamate + ATP = UDP-N-acetyl-alpha-D-muramoyl-L-alanyl-D-glutamate + ADP + phosphate + H(+). It participates in cell wall biogenesis; peptidoglycan biosynthesis. Functionally, cell wall formation. Catalyzes the addition of glutamate to the nucleotide precursor UDP-N-acetylmuramoyl-L-alanine (UMA). The chain is UDP-N-acetylmuramoylalanine--D-glutamate ligase from Mycobacterium avium (strain 104).